The primary structure comprises 337 residues: UDP-3-O-acylglucosamine N-acyltransferase (337 aa).

The active-site Proton acceptor is the H238.

It belongs to the transferase hexapeptide repeat family. LpxD subfamily. As to quaternary structure, homotrimer.

The enzyme catalyses a UDP-3-O-[(3R)-3-hydroxyacyl]-alpha-D-glucosamine + a (3R)-hydroxyacyl-[ACP] = a UDP-2-N,3-O-bis[(3R)-3-hydroxyacyl]-alpha-D-glucosamine + holo-[ACP] + H(+). The protein operates within bacterial outer membrane biogenesis; LPS lipid A biosynthesis. Its function is as follows. Catalyzes the N-acylation of UDP-3-O-acylglucosamine using 3-hydroxyacyl-ACP as the acyl donor. Is involved in the biosynthesis of lipid A, a phosphorylated glycolipid that anchors the lipopolysaccharide to the outer membrane of the cell. In Xanthomonas oryzae pv. oryzae (strain MAFF 311018), this protein is UDP-3-O-acylglucosamine N-acyltransferase.